Consider the following 336-residue polypeptide: Ventral anterior homeobox 1 (336 aa).

A compositionally biased stretch (basic and acidic residues) spans 1 to 34; that stretch reads MFGKTDKMDVRCHSDTEAARVSKNAHKESREIKG. 2 disordered regions span residues 1-39 and 50-69; these read MFGKTDKMDVRCHSDTEAARVSKNAHKESREIKGAEGSL and AFSASGASEDCNKSKSNSSA. A DNA-binding region (homeobox) is located at residues 100–159; sequence PKRTRTSFTAEQLYRLEMEFQRCQYVVGRERTELARQLNLSETQVKVWFQNRRTKQKKDQ. Residues 236–250 show a composition bias toward low complexity; that stretch reads PGPAGAASQHPPAVG. Disordered regions lie at residues 236–267 and 316–336; these read PGPAGAASQHPPAVGGAPGPGPAGPGGLHAGA and SAFEPYSRTNNKEGAEKKALD. Basic and acidic residues predominate over residues 325–336; the sequence is NNKEGAEKKALD.

The protein belongs to the EMX homeobox family.

It is found in the nucleus. Its function is as follows. Transcription factor that may function in dorsoventral specification of the forebrain. Required for axon guidance and major tract formation in the developing forebrain. May contribute to the differentiation of the neuroretina, pigmented epithelium and optic stalk. In Rattus norvegicus (Rat), this protein is Ventral anterior homeobox 1 (Vax1).